A 1935-amino-acid polypeptide reads, in one-letter code: Myosin-7 (1935 aa).

One can recognise a Myosin N-terminal SH3-like domain in the interval D32–P81. The 694-residue stretch at D85–D778 folds into the Myosin motor domain. At K129 the chain carries N6,N6,N6-trimethyllysine. G178–T185 is an ATP binding site. T378 is modified (phosphothreonine). Actin-binding regions lie at residues L655–E677 and K757–G771. The 30-residue stretch at L781–S810 folds into the IQ domain. Positions L839–E1935 form a coiled coil. Phosphoserine occurs at positions 1137 and 1269. At T1282 the chain carries Phosphothreonine. At Y1308 the chain carries Phosphotyrosine. Phosphothreonine is present on T1309. A Phosphoserine modification is found at S1510. T1513 bears the Phosphothreonine mark. A disordered region spans residues E1907–E1935. Positions K1923 to E1935 are enriched in basic and acidic residues.

This sequence belongs to the TRAFAC class myosin-kinesin ATPase superfamily. Myosin family. Muscle myosin is a hexameric protein that consists of 2 heavy chain subunits (MHC), 2 alkali light chain subunits (MLC) and 2 regulatory light chain subunits (MLC-2). Interacts with ECPAS. Interacts (via C-terminus) with LRRC39.

Its subcellular location is the cytoplasm. It is found in the myofibril. The protein localises to the sarcomere. Its function is as follows. Myosins are actin-based motor molecules with ATPase activity essential for muscle contraction. Forms regular bipolar thick filaments that, together with actin thin filaments, constitute the fundamental contractile unit of skeletal and cardiac muscle. In Sus scrofa (Pig), this protein is Myosin-7 (MYH7).